The sequence spans 265 residues: RING finger protein 208 (265 aa).

Residues 83–106 form a disordered region; it reads MPTLEGASHTPPLPRRPRKGSSEL. S103 carries the phosphoserine modification. The segment at 147–194 adopts an RING-type zinc-finger fold; sequence CPTCGHTYNVTQRRPRVLSCLHSVCEQCLQILYESCPKYKFISCPTCH.

The polypeptide is RING finger protein 208 (Rnf208) (Mus musculus (Mouse)).